The sequence spans 368 residues: sn-1 linoleoyl-lipid 6-desaturase (368 aa).

2 helical membrane-spanning segments follow: residues 47–67 (IILAWVVSAWTFVVFGPDVLW) and 68–88 (MKLLGCIVLGFGVSAVGFNIS). The Histidine box-1 motif lies at 89 to 93 (HDGNH). The Histidine box-2 motif lies at 124–129 (HNVLHH). 3 helical membrane passes run 164–184 (WFIWFVYPFIPYYWSIADVQT), 204–224 (IATLLAFKAFGVAVFLIIPIA), and 233–253 (VIGASIVYMTHGLVACVVFML). The short motif at 305–309 (HHLFP) is the Histidine box-3 element.

This sequence belongs to the fatty acid desaturase type 2 family. It depends on Fe(2+) as a cofactor.

It localises to the cell inner membrane. It is found in the cellular thylakoid membrane. It carries out the reaction a 1-[(9Z,12Z)-octadecdienoyl]-2-acyl-glycerolipid + 2 reduced [2Fe-2S]-[ferredoxin] + O2 + 2 H(+) = a 1-[(6Z,9Z,12Z)-octadectrienoyl]-2-acyl-glycerolipid + 2 oxidized [2Fe-2S]-[ferredoxin] + 2 H2O. The protein operates within lipid metabolism; polyunsaturated fatty acid biosynthesis. Its activity is regulated as follows. Activity requires ferredoxin, which is the natural electron donor, or cytochrome b5. In addition, activity is increased in the presence of the intermediate electron donors, NADPH and FADH(2). Its function is as follows. Desaturase involved in fatty acid biosynthesis. Introduces a double bond at carbon 6 of linoleoyl group (18:2) attached to the sn-1 position of the glycerol moiety of membrane glycerolipids, leading to the formation of gamma-linolenic acid (GLA). The protein is sn-1 linoleoyl-lipid 6-desaturase of Arthrospira platensis (Spirulina platensis).